Here is a 193-residue protein sequence, read N- to C-terminus: ATP synthase subunit b (193 aa).

The chain crosses the membrane as a helical span at residues 35 to 55 (IPMMLATFIAFVIVFLLLFFF).

The protein belongs to the ATPase B chain family. In terms of assembly, F-type ATPases have 2 components, F(1) - the catalytic core - and F(0) - the membrane proton channel. F(1) has five subunits: alpha(3), beta(3), gamma(1), delta(1), epsilon(1). F(0) has three main subunits: a(1), b(2) and c(10-14). The alpha and beta chains form an alternating ring which encloses part of the gamma chain. F(1) is attached to F(0) by a central stalk formed by the gamma and epsilon chains, while a peripheral stalk is formed by the delta and b chains.

It localises to the cell membrane. F(1)F(0) ATP synthase produces ATP from ADP in the presence of a proton or sodium gradient. F-type ATPases consist of two structural domains, F(1) containing the extramembraneous catalytic core and F(0) containing the membrane proton channel, linked together by a central stalk and a peripheral stalk. During catalysis, ATP synthesis in the catalytic domain of F(1) is coupled via a rotary mechanism of the central stalk subunits to proton translocation. Functionally, component of the F(0) channel, it forms part of the peripheral stalk, linking F(1) to F(0). In Mycoplasmopsis synoviae (strain 53) (Mycoplasma synoviae), this protein is ATP synthase subunit b.